The primary structure comprises 648 residues: Leucine aminopeptidase 2 (648 aa).

A peptide contacts are provided by residues 143 to 145 (QCQ) and 269 to 274 (PYGGME). His-298 provides a ligand contact to Zn(2+). Glu-299 functions as the Proton acceptor in the catalytic mechanism. Residues His-302 and Glu-321 each contribute to the Zn(2+) site. Tyr-408 acts as the Proton donor in catalysis.

This sequence belongs to the peptidase M1 family. Requires Zn(2+) as cofactor.

The protein localises to the cytoplasm. The protein resides in the nucleus. The enzyme catalyses an epoxide + H2O = an ethanediol. Functionally, aminopeptidase that preferentially cleaves di- and tripeptides. Also has low epoxide hydrolase activity (in vitro). Can hydrolyze the epoxide leukotriene LTA(4) but it forms preferentially 5,6-dihydroxy-7,9,11,14-eicosatetraenoic acid rather than the cytokine leukotriene B(4) as the product compared to the homologous mammalian enzyme (in vitro). This chain is Leucine aminopeptidase 2, found in Lodderomyces elongisporus (strain ATCC 11503 / CBS 2605 / JCM 1781 / NBRC 1676 / NRRL YB-4239) (Yeast).